A 235-amino-acid polypeptide reads, in one-letter code: Small ribosomal subunit protein uS3 (235 aa).

One can recognise a KH type-2 domain in the interval 39-107; that stretch reads VRKFLNKELA…PAQINIAEVK (69 aa). A disordered region spans residues 215–235; sequence AQSEQQPADKPKKAPRGKGRK.

Belongs to the universal ribosomal protein uS3 family. As to quaternary structure, part of the 30S ribosomal subunit. Forms a tight complex with proteins S10 and S14.

Functionally, binds the lower part of the 30S subunit head. Binds mRNA in the 70S ribosome, positioning it for translation. This chain is Small ribosomal subunit protein uS3, found in Haemophilus influenzae (strain ATCC 51907 / DSM 11121 / KW20 / Rd).